Reading from the N-terminus, the 106-residue chain is ATP-dependent Clp protease adapter protein ClpS (106 aa).

Positions 1–13 (MGNNSTWSQSENL) are enriched in polar residues. Residues 1-21 (MGNNSTWSQSENLTADKQKEK) form a disordered region.

The protein belongs to the ClpS family. Binds to the N-terminal domain of the chaperone ClpA.

In terms of biological role, involved in the modulation of the specificity of the ClpAP-mediated ATP-dependent protein degradation. The sequence is that of ATP-dependent Clp protease adapter protein ClpS from Pectobacterium carotovorum subsp. carotovorum (strain PC1).